Here is a 215-residue protein sequence, read N- to C-terminus: UPF0502 protein Shew_1617 (215 aa).

Belongs to the UPF0502 family.

In Shewanella loihica (strain ATCC BAA-1088 / PV-4), this protein is UPF0502 protein Shew_1617.